The sequence spans 318 residues: Formimidoylglutamase (318 aa).

Residues His124, Asp153, His155, Asp157, Cys241, and Asp243 each contribute to the Mn(2+) site.

It belongs to the arginase family. It depends on Mn(2+) as a cofactor.

The enzyme catalyses N-formimidoyl-L-glutamate + H2O = formamide + L-glutamate. It functions in the pathway amino-acid degradation; L-histidine degradation into L-glutamate; L-glutamate from N-formimidoyl-L-glutamate (hydrolase route): step 1/1. Catalyzes the conversion of N-formimidoyl-L-glutamate to L-glutamate and formamide. The polypeptide is Formimidoylglutamase (Fusobacterium nucleatum subsp. nucleatum (strain ATCC 25586 / DSM 15643 / BCRC 10681 / CIP 101130 / JCM 8532 / KCTC 2640 / LMG 13131 / VPI 4355)).